A 184-amino-acid chain; its full sequence is J-type co-chaperone JAC1, mitochondrial (184 aa).

The transit peptide at 1–10 (MLKYLVQRRF) directs the protein to the mitochondrion. Residues 13–82 (TFYELFPKTF…LRRSQYMLKL (70 aa)) enclose the J domain. Residues 48-50 (HPD) carry the HSP70 binding motif. The tract at residues 71–184 (DPLRRSQYML…APGKQLEMNH (114 aa)) is interaction with ISU1.

It belongs to the HscB family. As to quaternary structure, interacts with ISU1 and SSQ1.

The protein localises to the mitochondrion matrix. Co-chaperone required for the assembly of iron-sulfur (Fe/S) clusters in mitochondria. Stimulates the ATPase activity of its specialized Hsp70 chaperone partner SSQ1, to mediate the transfer of iron-sulfur clusters from ISU1 to GRX5. Binds to the substrate protein ISU1 and targets it to SSQ1. The polypeptide is J-type co-chaperone JAC1, mitochondrial (Saccharomyces cerevisiae (strain ATCC 204508 / S288c) (Baker's yeast)).